Consider the following 380-residue polypeptide: Tryptophan--tRNA ligase 2 (380 aa).

The short motif at 74–82 (PSGPMHLGH) is the 'HIGH' region element. Residues 249 to 253 (KMSSS) carry the 'KMSKS' region motif.

This sequence belongs to the class-I aminoacyl-tRNA synthetase family.

The protein resides in the cytoplasm. It carries out the reaction tRNA(Trp) + L-tryptophan + ATP = L-tryptophyl-tRNA(Trp) + AMP + diphosphate + H(+). This Halobacterium salinarum (strain ATCC 700922 / JCM 11081 / NRC-1) (Halobacterium halobium) protein is Tryptophan--tRNA ligase 2.